A 487-amino-acid chain; its full sequence is Structure-specific endonuclease subunit SLX1 (487 aa).

The region spanning 27 to 109 (PFYACYLLRS…QKPELSRHLR (83 aa)) is the GIY-YIG domain. Residues 44-69 (RTYVGSTPDPPRRIRQHNGELKQGAW) form a disordered region. The segment at 262–328 (CHLCQERIAF…LPYQGLCPNC (67 aa)) adopts an SLX1-type zinc-finger fold. Residues 359–396 (KAEKAEKAEKAEKAEKAEKAEKAGRKVRQREMKTKKGD) show a composition bias toward basic and acidic residues. 2 disordered regions span residues 359–407 (KAEK…QPES) and 433–475 (PARS…SEPE). Over residues 397–407 (QSNGTVAQPES) the composition is skewed to polar residues. The segment covering 438 to 455 (KSKDVGGEGIRHSTHTDD) has biased composition (basic and acidic residues). A compositionally biased stretch (acidic residues) spans 465 to 475 (ETEDESESEPE).

Belongs to the SLX1 family. Forms a heterodimer with SLX4. A divalent metal cation is required as a cofactor.

The protein resides in the nucleus. Functionally, catalytic subunit of the SLX1-SLX4 structure-specific endonuclease that resolves DNA secondary structures generated during DNA repair and recombination. Has endonuclease activity towards branched DNA substrates, introducing single-strand cuts in duplex DNA close to junctions with ss-DNA. This is Structure-specific endonuclease subunit SLX1 from Cryptococcus neoformans var. neoformans serotype D (strain B-3501A) (Filobasidiella neoformans).